A 752-amino-acid polypeptide reads, in one-letter code: Xanthine dehydrogenase molybdenum-binding subunit (752 aa).

Mo-molybdopterin contacts are provided by Gln206, Phe237, Arg350, and Ala516.

This sequence belongs to the xanthine dehydrogenase family. In terms of assembly, heterotrimer of XdhA, XdhB and XdhC. The cofactor is Mo-molybdopterin.

It carries out the reaction xanthine + NAD(+) + H2O = urate + NADH + H(+). The enzyme catalyses hypoxanthine + NAD(+) + H2O = xanthine + NADH + H(+). It functions in the pathway purine metabolism; hypoxanthine degradation; urate from hypoxanthine: step 1/2. Its pathway is purine metabolism; hypoxanthine degradation; urate from hypoxanthine: step 2/2. Functionally, presumed to be a dehydrogenase, but possibly an oxidase. Participates in limited purine salvage (requires aspartate) but does not support aerobic growth on purines as the sole carbon source (purine catabolism). The chain is Xanthine dehydrogenase molybdenum-binding subunit (xdhA) from Escherichia coli O157:H7.